Reading from the N-terminus, the 459-residue chain is Putrescine aminotransferase (459 aa).

Pyridoxal 5'-phosphate-binding positions include 150–151 and glutamine 274; that span reads GT. Lysine 300 carries the post-translational modification N6-(pyridoxal phosphate)lysine. Threonine 332 is a binding site for pyridoxal 5'-phosphate.

This sequence belongs to the class-III pyridoxal-phosphate-dependent aminotransferase family. Putrescine aminotransferase subfamily. Requires pyridoxal 5'-phosphate as cofactor.

It carries out the reaction an alkane-alpha,omega-diamine + 2-oxoglutarate = an omega-aminoaldehyde + L-glutamate. The catalysed reaction is putrescine + 2-oxoglutarate = 1-pyrroline + L-glutamate + H2O. It catalyses the reaction cadaverine + 2-oxoglutarate = 5-aminopentanal + L-glutamate. It participates in amine and polyamine degradation; putrescine degradation; 4-aminobutanal from putrescine (transaminase route): step 1/1. Its function is as follows. Catalyzes the aminotransferase reaction from putrescine to 2-oxoglutarate, leading to glutamate and 4-aminobutanal, which spontaneously cyclizes to form 1-pyrroline. This is the first step in one of two pathways for putrescine degradation, where putrescine is converted into 4-aminobutanoate (gamma-aminobutyrate or GABA) via 4-aminobutanal. Also functions as a cadaverine transaminase in a a L-lysine degradation pathway to succinate that proceeds via cadaverine, glutarate and L-2-hydroxyglutarate. This is Putrescine aminotransferase from Escherichia coli O7:K1 (strain IAI39 / ExPEC).